Consider the following 195-residue polypeptide: Cholesin (195 aa).

Positions Met1–Ala78 are disordered. Basic and acidic residues-rich tracts occupy residues Gly8–Arg18 and Glu26–Thr39. A phosphoserine mark is found at Ser41, Ser48, and Ser52. The span at Pro53–Glu77 shows a compositional bias: basic and acidic residues. Ser96 bears the Phosphoserine mark.

In terms of tissue distribution, secreted via exosomes, secreted from the instestine, secretion is induced by feeding and cholesterol absorption. Expressed in enterocytes.

It localises to the secreted. In terms of biological role, hormone secreted from the intestine in response to cholesterol, where it acts to inhibit cholesterol synthesis in the liver and VLDL secretion,leading to a reduction in circulating cholesterol levels. Acts through binding to its receptor, GPR146. The chain is Cholesin (Chlsn) from Mus musculus (Mouse).